Reading from the N-terminus, the 122-residue chain is Large ribosomal subunit protein uL18 (122 aa).

Residues 1–21 (MSKLSRKQQTQKRHRRLRRHI) are compositionally biased toward basic residues. Positions 1–25 (MSKLSRKQQTQKRHRRLRRHITGTS) are disordered.

This sequence belongs to the universal ribosomal protein uL18 family. In terms of assembly, part of the 50S ribosomal subunit; part of the 5S rRNA/L5/L18/L25 subcomplex. Contacts the 5S and 23S rRNAs.

This is one of the proteins that bind and probably mediate the attachment of the 5S RNA into the large ribosomal subunit, where it forms part of the central protuberance. The protein is Large ribosomal subunit protein uL18 of Synechococcus sp. (strain CC9902).